The sequence spans 445 residues: GTPase Der (445 aa).

EngA-type G domains lie at 3–167 (PVIA…NLPD) and 180–353 (IKLA…ASAN). GTP-binding positions include 9 to 16 (GRPNVGKS), 56 to 60 (DTGGF), 119 to 122 (NKAE), 186 to 193 (GRPNVGKS), 233 to 237 (DTAGL), and 298 to 301 (NKWD). Positions 354-438 (RKMSTPVLTR…PLRIQLKSSV (85 aa)) constitute a KH-like domain.

This sequence belongs to the TRAFAC class TrmE-Era-EngA-EngB-Septin-like GTPase superfamily. EngA (Der) GTPase family. As to quaternary structure, associates with the 50S ribosomal subunit.

In terms of biological role, GTPase that plays an essential role in the late steps of ribosome biogenesis. This Polaromonas naphthalenivorans (strain CJ2) protein is GTPase Der.